The chain runs to 200 residues: Molybdenum cofactor guanylyltransferase (200 aa).

Residues 10 to 12 (LAG), lysine 23, asparagine 51, aspartate 69, and aspartate 99 each bind GTP. Aspartate 99 contributes to the Mg(2+) binding site.

This sequence belongs to the MobA family. Monomer. Mg(2+) serves as cofactor.

It localises to the cytoplasm. It catalyses the reaction Mo-molybdopterin + GTP + H(+) = Mo-molybdopterin guanine dinucleotide + diphosphate. Transfers a GMP moiety from GTP to Mo-molybdopterin (Mo-MPT) cofactor (Moco or molybdenum cofactor) to form Mo-molybdopterin guanine dinucleotide (Mo-MGD) cofactor. This chain is Molybdenum cofactor guanylyltransferase, found in Shewanella halifaxensis (strain HAW-EB4).